Reading from the N-terminus, the 203-residue chain is Small ribosomal subunit protein uS4 (203 aa).

The 61-residue stretch at arginine 93 to lysine 153 folds into the S4 RNA-binding domain.

The protein belongs to the universal ribosomal protein uS4 family. In terms of assembly, part of the 30S ribosomal subunit. Contacts protein S5. The interaction surface between S4 and S5 is involved in control of translational fidelity.

One of the primary rRNA binding proteins, it binds directly to 16S rRNA where it nucleates assembly of the body of the 30S subunit. Its function is as follows. With S5 and S12 plays an important role in translational accuracy. The polypeptide is Small ribosomal subunit protein uS4 (Lactobacillus delbrueckii subsp. bulgaricus (strain ATCC 11842 / DSM 20081 / BCRC 10696 / JCM 1002 / NBRC 13953 / NCIMB 11778 / NCTC 12712 / WDCM 00102 / Lb 14)).